A 118-amino-acid chain; its full sequence is BolA-like protein 3 (118 aa).

Belongs to the BolA/IbaG family. Interacts with NFU1.

Its subcellular location is the mitochondrion matrix. Functionally, acts as a mitochondrial iron-sulfur (Fe-S) cluster assembly factor that facilitates [4Fe-4S] cluster insertion into a subset of mitochondrial proteins such as lipoyl synthase (LS) and succinate dehydrogenase (SDH). Required during the last step of iron-sulfur protein assembly when the iron-sulfur cluster is inserted into the target protein. Acts together with NFU1, later than BOL1 and GRX5 in the [4Fe-4S] cluster insertion process. Not required for [2Fe-2S] cluster insertion into mitochondrial proteins. The sequence is that of BolA-like protein 3 from Saccharomyces cerevisiae (strain ATCC 204508 / S288c) (Baker's yeast).